Here is a 186-residue protein sequence, read N- to C-terminus: Potassium-transporting ATPase KdpC subunit 1 (186 aa).

Residues 10 to 30 (LTIITMVLCGFLFPLAITLIG) traverse the membrane as a helical segment.

Belongs to the KdpC family. In terms of assembly, the system is composed of three essential subunits: KdpA, KdpB and KdpC.

Its subcellular location is the cell membrane. Part of the high-affinity ATP-driven potassium transport (or Kdp) system, which catalyzes the hydrolysis of ATP coupled with the electrogenic transport of potassium into the cytoplasm. This subunit acts as a catalytic chaperone that increases the ATP-binding affinity of the ATP-hydrolyzing subunit KdpB by the formation of a transient KdpB/KdpC/ATP ternary complex. The chain is Potassium-transporting ATPase KdpC subunit 1 from Staphylococcus aureus (strain Mu50 / ATCC 700699).